Reading from the N-terminus, the 181-residue chain is Translationally-controlled tumor protein homolog (181 aa).

A TCTP domain is found at 1–181; sequence MLIYKDIFTD…VKEAILEEKC (181 aa).

The protein belongs to the TCTP family.

It localises to the cytoplasm. Its function is as follows. Involved in calcium binding and microtubule stabilization. The polypeptide is Translationally-controlled tumor protein homolog (tct-1) (Caenorhabditis briggsae).